The primary structure comprises 664 residues: Glycine--tRNA ligase beta subunit (664 aa).

It belongs to the class-II aminoacyl-tRNA synthetase family. Tetramer of two alpha and two beta subunits.

The protein localises to the cytoplasm. It carries out the reaction tRNA(Gly) + glycine + ATP = glycyl-tRNA(Gly) + AMP + diphosphate. The protein is Glycine--tRNA ligase beta subunit of Rickettsia conorii (strain ATCC VR-613 / Malish 7).